A 437-amino-acid polypeptide reads, in one-letter code: Glutamate-1-semialdehyde 2,1-aminomutase (437 aa).

Lysine 277 carries the post-translational modification N6-(pyridoxal phosphate)lysine.

It belongs to the class-III pyridoxal-phosphate-dependent aminotransferase family. HemL subfamily. Homodimer. It depends on pyridoxal 5'-phosphate as a cofactor.

The protein localises to the cytoplasm. It carries out the reaction (S)-4-amino-5-oxopentanoate = 5-aminolevulinate. The protein operates within porphyrin-containing compound metabolism; protoporphyrin-IX biosynthesis; 5-aminolevulinate from L-glutamyl-tRNA(Glu): step 2/2. It functions in the pathway porphyrin-containing compound metabolism; chlorophyll biosynthesis. The protein is Glutamate-1-semialdehyde 2,1-aminomutase of Thermosynechococcus vestitus (strain NIES-2133 / IAM M-273 / BP-1).